The primary structure comprises 462 residues: Elongation factor 1-alpha (462 aa).

The residue at position 2 (Gly-2) is a N,N,N-trimethylglycine. An N6,N6-dimethyllysine; alternate modification is found at Lys-3. N6-methyllysine; alternate is present on Lys-3. A tr-type G domain is found at 5–242 (KAHVNVVVIG…DAIEPPVRPS (238 aa)). Residues 14 to 21 (GHVDSGKS) are G1. 14–21 (GHVDSGKS) is a GTP binding site. Lys-30 bears the N6-methyllysine mark. The G2 stretch occupies residues 70–74 (GITID). Lys-79 carries the N6,N6,N6-trimethyllysine modification. A G3 region spans residues 91 to 94 (DAPG). GTP contacts are provided by residues 91-95 (DAPGH) and 153-156 (NKMD). The tract at residues 153 to 156 (NKMD) is G4. The segment at 192–194 (SGW) is G5. Residue Lys-318 is modified to N6,N6-dimethyllysine; alternate. Lys-318 carries the post-translational modification N6-methyllysine; alternate. An N6-methyllysine modification is found at Lys-392.

Belongs to the TRAFAC class translation factor GTPase superfamily. Classic translation factor GTPase family. EF-Tu/EF-1A subfamily.

The protein resides in the cytoplasm. Its function is as follows. This protein promotes the GTP-dependent binding of aminoacyl-tRNA to the A-site of ribosomes during protein biosynthesis. This is Elongation factor 1-alpha (TEF1) from Serendipita indica (Root endophyte fungus).